The following is a 256-amino-acid chain: L-tyrosine degradation gene cluster protein hmgX (256 aa).

Belongs to the TTC36 family.

It is found in the cytoplasm. Its function is as follows. Part of the L-tyrosine degradation gene cluster that mediates the biosynthesis of the brownish pigment pyomelanin as an alternative melanin. The 4-hydroxyphenylpyruvate dioxygenase hppD catalyzes the conversion of 4-hydroxyphenylpyruvate to homogentisic acid (HGA). The protein hmgX is crucial for this conversion and thus, probably functions as an accessory factor to mediate specific activity of hppD. The homogentisate 1,2-dioxygenase hmgA is then involved in the cleavage of the aromatic ring of HGA and its conversion to 4-maleylacetoacetate. When hmgA activity is lowered by the cell wall integrity (CWI) signaling pathway, HGA accumulates and leads to the production of pyomelanin through benzoquinone acetic acid after oxidation and polymerization. On the opposite, in non-stress conditions, both hppD and hmgA activities are balanced and HGA is degraded into 4-maleylacetoacetate. 4-maleylacetoacetate is further converted to 4-fumarylacetoacetate by the maleylacetoacetate isomerase maiA, which is degraded into fumarate and acetoacetate by the fumarylacetoacetase fahA. The protein is L-tyrosine degradation gene cluster protein hmgX of Aspergillus fumigatus (strain ATCC MYA-4609 / CBS 101355 / FGSC A1100 / Af293) (Neosartorya fumigata).